We begin with the raw amino-acid sequence, 325 residues long: Tetraacyldisaccharide 4'-kinase (325 aa).

55 to 62 (TAGGNGKT) lines the ATP pocket.

The protein belongs to the LpxK family.

The catalysed reaction is a lipid A disaccharide + ATP = a lipid IVA + ADP + H(+). The protein operates within glycolipid biosynthesis; lipid IV(A) biosynthesis; lipid IV(A) from (3R)-3-hydroxytetradecanoyl-[acyl-carrier-protein] and UDP-N-acetyl-alpha-D-glucosamine: step 6/6. Transfers the gamma-phosphate of ATP to the 4'-position of a tetraacyldisaccharide 1-phosphate intermediate (termed DS-1-P) to form tetraacyldisaccharide 1,4'-bis-phosphate (lipid IVA). The sequence is that of Tetraacyldisaccharide 4'-kinase from Salmonella dublin (strain CT_02021853).